Consider the following 347-residue polypeptide: MISNFDCTDNQASSKVLRPPGGGSSDIFGSEMPQTPRNVKNRMASNIFAAEKDNGVKNNVRQGAHRFYFIGDAPRRGQKTVDSHNRLFGEPARPITPGKNHMKSSIPFGQNTEAVASAQKLLTTNGHYNGKSGSVSSASSSVSSSTENLKMNSGSRSVFRNMSTAAGPDTKETSQRESLCPPSPVPIEVPTPPADSLPIDNSCRDSEVGDVPADNSTYTKSDQVNEACQTRRDSGNNPELPYSLDQMAGVANVKEPLGLCPNEVKEDAQACSKLDSRNPITGLGLNGDGVGGLKPKKLKIREGNPVTGEGYKAGGNDFHHRQESNNGGTPVINKNRIPPGGYSSGLW.

Residues 1–14 (MISNFDCTDNQASS) show a composition bias toward polar residues. The tract at residues 1–33 (MISNFDCTDNQASSKVLRPPGGGSSDIFGSEMP) is disordered. Serine 24 is modified (phosphoserine). Threonine 35 and threonine 96 each carry phosphothreonine. Residues serine 105, serine 134, and serine 145 each carry the phosphoserine modification. Disordered regions lie at residues 127 to 193 (HYNG…PTPP) and 303 to 347 (GNPV…SGLW). The span at 132–145 (SGSVSSASSSVSSS) shows a compositional bias: low complexity. The segment covering 146-164 (TENLKMNSGSRSVFRNMST) has biased composition (polar residues). A compositionally biased stretch (pro residues) spans 181 to 193 (PPSPVPIEVPTPP).

It belongs to the MAP Jupiter family.

Its subcellular location is the nucleus. The protein localises to the cytoplasm. The protein resides in the cytoskeleton. It is found in the spindle. Functionally, binds to all microtubule populations. This is Microtubule-associated protein Jupiter from Drosophila yakuba (Fruit fly).